Consider the following 297-residue polypeptide: Homoserine kinase (297 aa).

An ATP-binding site is contributed by 84–94 (PLSKGFGSSAA).

This sequence belongs to the GHMP kinase family. Homoserine kinase subfamily.

The protein resides in the cytoplasm. The enzyme catalyses L-homoserine + ATP = O-phospho-L-homoserine + ADP + H(+). Its pathway is amino-acid biosynthesis; L-threonine biosynthesis; L-threonine from L-aspartate: step 4/5. Catalyzes the ATP-dependent phosphorylation of L-homoserine to L-homoserine phosphate. The polypeptide is Homoserine kinase (Shouchella clausii (strain KSM-K16) (Alkalihalobacillus clausii)).